A 387-amino-acid chain; its full sequence is MSLTASSTPQGFSTFITNLGIRDTTEDFVFLRSDVPCVADGVFTQSLFAGPSVTISRQNLQDGQAQGIIIISKNANVANGAVGIADAQEIIQLVAQETGIAAENLAIASTGVIGRRYPIEKIRAGLVGMGQKLTAADFDLAARGIMTTDTVSKIAARQVGNAKLVGIAKGVGMIEPNMATMLAFFFTDAAISANTLRQIFRSTIDKTFNCLSIDTDTSTSDSAVILANGLAGEVPEAEFASALQEIAHDLVLKIARDGEGATKVIEVTVDSAANYAQAKRVAKAIVNSPLVKTAVYGADPNWGRVAMAIGKCEDERDINPDQVVIRFDEVQVYPNTFQAENLEKLKEIMSKEKVNIHVSLNIGTDVATVWGCDLTEGYVEINGKYST.

Residues threonine 147, lysine 169, threonine 180, glutamate 259, asparagine 382, and threonine 387 each contribute to the substrate site. Threonine 180 functions as the Nucleophile in the catalytic mechanism.

This sequence belongs to the ArgJ family. Heterotetramer of two alpha and two beta chains.

The protein resides in the cytoplasm. It catalyses the reaction N(2)-acetyl-L-ornithine + L-glutamate = N-acetyl-L-glutamate + L-ornithine. The enzyme catalyses L-glutamate + acetyl-CoA = N-acetyl-L-glutamate + CoA + H(+). The protein operates within amino-acid biosynthesis; L-arginine biosynthesis; L-ornithine and N-acetyl-L-glutamate from L-glutamate and N(2)-acetyl-L-ornithine (cyclic): step 1/1. Its pathway is amino-acid biosynthesis; L-arginine biosynthesis; N(2)-acetyl-L-ornithine from L-glutamate: step 1/4. In terms of biological role, catalyzes two activities which are involved in the cyclic version of arginine biosynthesis: the synthesis of N-acetylglutamate from glutamate and acetyl-CoA as the acetyl donor, and of ornithine by transacetylation between N(2)-acetylornithine and glutamate. In Nostoc sp. (strain PCC 7120 / SAG 25.82 / UTEX 2576), this protein is Arginine biosynthesis bifunctional protein ArgJ 2.